The primary structure comprises 312 residues: Serine acetyltransferase 5 (312 aa).

The span at 1–17 shows a compositional bias: basic and acidic residues; sequence MPPAGELRHQSPSKEKL. A disordered region spans residues 1–25; that stretch reads MPPAGELRHQSPSKEKLSSVTQSDE.

It belongs to the transferase hexapeptide repeat family. In terms of assembly, homomultimer. Mostly expressed in stems, flowers and siliques. Localized in vascular tissues, particularly in phloem.

The protein resides in the cytoplasm. It catalyses the reaction L-serine + acetyl-CoA = O-acetyl-L-serine + CoA. It functions in the pathway amino-acid biosynthesis; L-cysteine biosynthesis; L-cysteine from L-serine: step 1/2. With respect to regulation, feedback inhibitions by L-Ser and acetyl-CoA. This is Serine acetyltransferase 5 (SAT5) from Arabidopsis thaliana (Mouse-ear cress).